A 229-amino-acid polypeptide reads, in one-letter code: Ribonuclease 3 (229 aa).

Positions 5-127 (LAGLERKLGY…LIGAIYLDAD (123 aa)) constitute an RNase III domain. Glu40 is a Mg(2+) binding site. Asp44 is an active-site residue. Asp113 and Glu116 together coordinate Mg(2+). The active site involves Glu116. Positions 154–224 (DPKTRLQEFL…AASALIALGV (71 aa)) constitute a DRBM domain.

Belongs to the ribonuclease III family. Homodimer. The cofactor is Mg(2+).

Its subcellular location is the cytoplasm. It catalyses the reaction Endonucleolytic cleavage to 5'-phosphomonoester.. Digests double-stranded RNA. Involved in the processing of primary rRNA transcript to yield the immediate precursors to the large and small rRNAs (23S and 16S). Processes some mRNAs, and tRNAs when they are encoded in the rRNA operon. Processes pre-crRNA and tracrRNA of type II CRISPR loci if present in the organism. This chain is Ribonuclease 3, found in Pseudomonas putida (strain ATCC 700007 / DSM 6899 / JCM 31910 / BCRC 17059 / LMG 24140 / F1).